The primary structure comprises 60 residues: Large ribosomal subunit protein bL32 (60 aa).

It belongs to the bacterial ribosomal protein bL32 family.

This chain is Large ribosomal subunit protein bL32, found in Azotobacter vinelandii (strain DJ / ATCC BAA-1303).